Reading from the N-terminus, the 172-residue chain is Protein CapG (172 aa).

It belongs to the transferase hexapeptide repeat family.

It functions in the pathway capsule biogenesis; capsule polysaccharide biosynthesis. Functionally, required for the biosynthesis of type 1 capsular polysaccharide. This Staphylococcus aureus protein is Protein CapG (capG).